The following is a 292-amino-acid chain: tRNA pseudouridine synthase B (292 aa).

D38 acts as the Nucleophile in catalysis.

The protein belongs to the pseudouridine synthase TruB family. Type 1 subfamily.

The enzyme catalyses uridine(55) in tRNA = pseudouridine(55) in tRNA. Functionally, responsible for synthesis of pseudouridine from uracil-55 in the psi GC loop of transfer RNAs. The protein is tRNA pseudouridine synthase B of Streptococcus gordonii (strain Challis / ATCC 35105 / BCRC 15272 / CH1 / DL1 / V288).